The chain runs to 131 residues: Fumarate reductase subunit C (131 aa).

Transmembrane regions (helical) follow at residues 30–50 (EGTA…LFAL), 57–77 (WMGF…LITL), and 109–129 (IIKG…YVAL).

It belongs to the FrdC family. In terms of assembly, part of an enzyme complex containing four subunits: a flavoprotein (FrdA), an iron-sulfur protein (FrdB), and two hydrophobic anchor proteins (FrdC and FrdD).

Its subcellular location is the cell inner membrane. Its function is as follows. Two distinct, membrane-bound, FAD-containing enzymes are responsible for the catalysis of fumarate and succinate interconversion; fumarate reductase is used in anaerobic growth, and succinate dehydrogenase is used in aerobic growth. Anchors the catalytic components of the fumarate reductase complex to the cell inner membrane, binds quinones. In Salmonella choleraesuis (strain SC-B67), this protein is Fumarate reductase subunit C.